A 467-amino-acid chain; its full sequence is 3-isopropylmalate dehydratase large subunit (467 aa).

Cys347, Cys408, and Cys411 together coordinate [4Fe-4S] cluster.

It belongs to the aconitase/IPM isomerase family. LeuC type 1 subfamily. As to quaternary structure, heterodimer of LeuC and LeuD. [4Fe-4S] cluster is required as a cofactor.

The enzyme catalyses (2R,3S)-3-isopropylmalate = (2S)-2-isopropylmalate. It participates in amino-acid biosynthesis; L-leucine biosynthesis; L-leucine from 3-methyl-2-oxobutanoate: step 2/4. Catalyzes the isomerization between 2-isopropylmalate and 3-isopropylmalate, via the formation of 2-isopropylmaleate. This chain is 3-isopropylmalate dehydratase large subunit, found in Bordetella pertussis (strain Tohama I / ATCC BAA-589 / NCTC 13251).